The sequence spans 295 residues: Protease HtpX homolog (295 aa).

The next 2 membrane-spanning stretches (helical) occupy residues L15 to F35 and A39 to G59. H143 contributes to the Zn(2+) binding site. Residue E144 is part of the active site. Residue H147 coordinates Zn(2+). The next 2 helical transmembrane spans lie at A159 to W179 and V195 to A215. E224 provides a ligand contact to Zn(2+).

Belongs to the peptidase M48B family. The cofactor is Zn(2+).

It is found in the cell membrane. This Ligilactobacillus salivarius (strain UCC118) (Lactobacillus salivarius) protein is Protease HtpX homolog.